A 243-amino-acid polypeptide reads, in one-letter code: Small ribosomal subunit protein uS5 (243 aa).

2 stretches are compositionally biased toward basic and acidic residues: residues Met1 to Lys21 and Leu34 to Gly46. The tract at residues Met1–Pro85 is disordered. The region spanning Phe89–Val152 is the S5 DRBM domain.

Belongs to the universal ribosomal protein uS5 family. In terms of assembly, part of the 30S ribosomal subunit. Contacts proteins S4 and S8.

In terms of biological role, with S4 and S12 plays an important role in translational accuracy. Located at the back of the 30S subunit body where it stabilizes the conformation of the head with respect to the body. The protein is Small ribosomal subunit protein uS5 of Mycoplasma mobile (strain ATCC 43663 / 163K / NCTC 11711) (Mesomycoplasma mobile).